Reading from the N-terminus, the 202-residue chain is Ribonuclease HII (202 aa).

Positions 11–200 (GLIAGVDEVG…VRKAIEEFNR (190 aa)) constitute an RNase H type-2 domain. Positions 17, 18, and 109 each coordinate a divalent metal cation.

The protein belongs to the RNase HII family. Mn(2+) is required as a cofactor. The cofactor is Mg(2+).

It is found in the cytoplasm. The catalysed reaction is Endonucleolytic cleavage to 5'-phosphomonoester.. Its function is as follows. Endonuclease that specifically degrades the RNA of RNA-DNA hybrids. The chain is Ribonuclease HII from Actinobacillus succinogenes (strain ATCC 55618 / DSM 22257 / CCUG 43843 / 130Z).